Reading from the N-terminus, the 297-residue chain is Polyamine aminopropyltransferase 2 (297 aa).

Positions 26-258 (FYWEPDVEGG…DLWTFFVALK (233 aa)) constitute a PABS domain. Gln-53 serves as a coordination point for S-methyl-5'-thioadenosine. Positions 84 and 108 each coordinate spermidine. Residues Asp-128 and 157–158 (DV) each bind S-methyl-5'-thioadenosine. The active-site Proton acceptor is Asp-176. Pro-184 contributes to the S-methyl-5'-thioadenosine binding site.

This sequence belongs to the spermidine/spermine synthase family. Homodimer or homotetramer.

The protein resides in the cytoplasm. It catalyses the reaction S-adenosyl 3-(methylsulfanyl)propylamine + putrescine = S-methyl-5'-thioadenosine + spermidine + H(+). Its pathway is amine and polyamine biosynthesis; spermidine biosynthesis; spermidine from putrescine: step 1/1. In terms of biological role, catalyzes the irreversible transfer of a propylamine group from the amino donor S-adenosylmethioninamine (decarboxy-AdoMet) to putrescine (1,4-diaminobutane) to yield spermidine. This Caldanaerobacter subterraneus subsp. tengcongensis (strain DSM 15242 / JCM 11007 / NBRC 100824 / MB4) (Thermoanaerobacter tengcongensis) protein is Polyamine aminopropyltransferase 2.